Consider the following 510-residue polypeptide: GMP synthase [glutamine-hydrolyzing] (510 aa).

The 191-residue stretch at lysine 5–threonine 195 folds into the Glutamine amidotransferase type-1 domain. Residue cysteine 82 is the Nucleophile of the active site. Residues histidine 169 and glutamate 171 contribute to the active site. The region spanning tryptophan 196–arginine 385 is the GMPS ATP-PPase domain. Serine 223–alanine 229 is an ATP binding site.

Homodimer.

The catalysed reaction is XMP + L-glutamine + ATP + H2O = GMP + L-glutamate + AMP + diphosphate + 2 H(+). The protein operates within purine metabolism; GMP biosynthesis; GMP from XMP (L-Gln route): step 1/1. Its function is as follows. Catalyzes the synthesis of GMP from XMP. The sequence is that of GMP synthase [glutamine-hydrolyzing] from Halothermothrix orenii (strain H 168 / OCM 544 / DSM 9562).